A 381-amino-acid polypeptide reads, in one-letter code: Queuine tRNA-ribosyltransferase (381 aa).

Catalysis depends on aspartate 92, which acts as the Proton acceptor. Substrate is bound by residues 92-96 (DSGGF), aspartate 146, glutamine 190, and glycine 217. Positions 248–254 (GVGRPED) are RNA binding. Aspartate 267 (nucleophile) is an active-site residue. The RNA binding; important for wobble base 34 recognition stretch occupies residues 272 to 276 (TRNAR). Residues cysteine 305, cysteine 307, cysteine 310, and histidine 337 each coordinate Zn(2+).

It belongs to the queuine tRNA-ribosyltransferase family. Homodimer. Within each dimer, one monomer is responsible for RNA recognition and catalysis, while the other monomer binds to the replacement base PreQ1. Zn(2+) is required as a cofactor.

It carries out the reaction 7-aminomethyl-7-carbaguanine + guanosine(34) in tRNA = 7-aminomethyl-7-carbaguanosine(34) in tRNA + guanine. It functions in the pathway tRNA modification; tRNA-queuosine biosynthesis. Its function is as follows. Catalyzes the base-exchange of a guanine (G) residue with the queuine precursor 7-aminomethyl-7-deazaguanine (PreQ1) at position 34 (anticodon wobble position) in tRNAs with GU(N) anticodons (tRNA-Asp, -Asn, -His and -Tyr). Catalysis occurs through a double-displacement mechanism. The nucleophile active site attacks the C1' of nucleotide 34 to detach the guanine base from the RNA, forming a covalent enzyme-RNA intermediate. The proton acceptor active site deprotonates the incoming PreQ1, allowing a nucleophilic attack on the C1' of the ribose to form the product. After dissociation, two additional enzymatic reactions on the tRNA convert PreQ1 to queuine (Q), resulting in the hypermodified nucleoside queuosine (7-(((4,5-cis-dihydroxy-2-cyclopenten-1-yl)amino)methyl)-7-deazaguanosine). The protein is Queuine tRNA-ribosyltransferase of Xanthomonas oryzae pv. oryzae (strain MAFF 311018).